Reading from the N-terminus, the 64-residue chain is Large ribosomal subunit protein uL30 (64 aa).

It belongs to the universal ribosomal protein uL30 family. Part of the 50S ribosomal subunit.

The chain is Large ribosomal subunit protein uL30 from Rhodopseudomonas palustris (strain BisA53).